Here is a 273-residue protein sequence, read N- to C-terminus: MAAVTRYSGKVVVVTGGSRGIGAAIVRAFVDSGAQVVFCDKDEAGGRALEQELSGTVFIPGDVTQERDLQTLVSETLSRFGHLDCVVNNAGYHPPAQLPEETSAQGFRQLLEVNLLGTYTLIKLALPHLRKSRGNIINISSLVGAIGQSQALTYVATKGAVTAMTKALALDESRHGVRVNCISPGNIWTPLWEELAASTSDPRATILEGTLAQPLGRMGQPAEVAAAAVFLASEATFCTGLELLVTGGAELGYGRKASKSSLGEVPTLPPNVH.

NAD(+) is bound by residues Arg-19, Ile-21, Asp-40, Lys-41, Asp-62, Val-63, Asn-89, Tyr-154, Lys-158, Ile-187, Thr-189, and Leu-191. Tyr-154 functions as the Proton acceptor in the catalytic mechanism.

The protein belongs to the short-chain dehydrogenases/reductases (SDR) family. As to quaternary structure, homotetramer.

The protein resides in the cytoplasm. It catalyses the reaction L-fucose + NAD(+) = L-fucono-1,5-lactone + NADH + H(+). It carries out the reaction D-arabinose + NAD(+) = D-arabinono-1,5-lactone + NADH + H(+). The catalysed reaction is L-galactose + NAD(+) = L-galactono-1,5-lactone + NADH + H(+). Its pathway is carbohydrate degradation; L-fucose degradation. Its function is as follows. Catalyzes the NAD(+)-dependent oxidation of L-fucose, yielding L-fucono-1,5-lactone, which rapidly converts spontaneously to L-fucone-1,4-lactone. Can also act on D-arabinose and L-galactose, with lower catalytic efficiency. Does not use NADPH. May be the initial enzyme of the putative L-fucose degradation pathway in mammals. This chain is L-fucose dehydrogenase, found in Mus musculus (Mouse).